We begin with the raw amino-acid sequence, 294 residues long: Nucleotide-binding protein Smlt1108 (294 aa).

16–23 (GLSGSGKS) provides a ligand contact to ATP. Residue 69-72 (DVRG) participates in GTP binding.

Belongs to the RapZ-like family.

Displays ATPase and GTPase activities. The sequence is that of Nucleotide-binding protein Smlt1108 from Stenotrophomonas maltophilia (strain K279a).